We begin with the raw amino-acid sequence, 640 residues long: Chaperone protein DnaK (640 aa).

T198 carries the post-translational modification Phosphothreonine; by autocatalysis. Residues 600-640 (KTQGAGAEGGEQPHGEQEAGGAAKGEKVVDADFEEVKDDKK) are disordered. The span at 630–640 (ADFEEVKDDKK) shows a compositional bias: acidic residues.

This sequence belongs to the heat shock protein 70 family.

In terms of biological role, acts as a chaperone. In Citrifermentans bemidjiense (strain ATCC BAA-1014 / DSM 16622 / JCM 12645 / Bem) (Geobacter bemidjiensis), this protein is Chaperone protein DnaK.